A 395-amino-acid polypeptide reads, in one-letter code: Sensor protein DltS (395 aa).

The next 2 membrane-spanning stretches (helical) occupy residues 9–29 (FVFL…AVSN) and 136–156 (FLIL…SLYL). The region spanning 177–387 (DASHELKTPI…RLEVQLPIDG (211 aa)) is the Histidine kinase domain. His180 carries the phosphohistidine; by autocatalysis modification.

The protein localises to the cell membrane. It carries out the reaction ATP + protein L-histidine = ADP + protein N-phospho-L-histidine.. In terms of biological role, member of the two-component regulatory system DltS/DltR. Regulates the expression of the dlt operon. Probably phosphorylates DltR. The protein is Sensor protein DltS (dltS) of Streptococcus agalactiae serotype III (strain NEM316).